A 229-amino-acid polypeptide reads, in one-letter code: Urease accessory protein UreF (229 aa).

It belongs to the UreF family. UreD, UreF and UreG form a complex that acts as a GTP-hydrolysis-dependent molecular chaperone, activating the urease apoprotein by helping to assemble the nickel containing metallocenter of UreC. The UreE protein probably delivers the nickel.

The protein resides in the cytoplasm. Functionally, required for maturation of urease via the functional incorporation of the urease nickel metallocenter. The protein is Urease accessory protein UreF of Nostoc sp. (strain PCC 7120 / SAG 25.82 / UTEX 2576).